Reading from the N-terminus, the 157-residue chain is 2-C-methyl-D-erythritol 2,4-cyclodiphosphate synthase (157 aa).

A divalent metal cation contacts are provided by aspartate 8 and histidine 10. Residues 8 to 10 and 34 to 35 contribute to the 4-CDP-2-C-methyl-D-erythritol 2-phosphate site; these read DVH and HS. Histidine 42 lines the a divalent metal cation pocket. 4-CDP-2-C-methyl-D-erythritol 2-phosphate is bound by residues 56-58, 61-65, 100-106, 132-135, phenylalanine 139, and arginine 142; these read DIG, FPDTD, AQAPKMA, and TTTE.

Belongs to the IspF family. Homotrimer. A divalent metal cation is required as a cofactor.

The catalysed reaction is 4-CDP-2-C-methyl-D-erythritol 2-phosphate = 2-C-methyl-D-erythritol 2,4-cyclic diphosphate + CMP. It participates in isoprenoid biosynthesis; isopentenyl diphosphate biosynthesis via DXP pathway; isopentenyl diphosphate from 1-deoxy-D-xylulose 5-phosphate: step 4/6. In terms of biological role, involved in the biosynthesis of isopentenyl diphosphate (IPP) and dimethylallyl diphosphate (DMAPP), two major building blocks of isoprenoid compounds. Catalyzes the conversion of 4-diphosphocytidyl-2-C-methyl-D-erythritol 2-phosphate (CDP-ME2P) to 2-C-methyl-D-erythritol 2,4-cyclodiphosphate (ME-CPP) with a corresponding release of cytidine 5-monophosphate (CMP). The chain is 2-C-methyl-D-erythritol 2,4-cyclodiphosphate synthase from Pseudomonas syringae pv. tomato (strain ATCC BAA-871 / DC3000).